The chain runs to 83 residues: Acyl carrier protein (83 aa).

Positions 2 to 77 (NEILSKIKSI…DANQYIKKYL (76 aa)) constitute a Carrier domain. Residue Ser37 is modified to O-(pantetheine 4'-phosphoryl)serine.

The protein belongs to the acyl carrier protein (ACP) family. Post-translationally, 4'-phosphopantetheine is transferred from CoA to a specific serine of apo-ACP by AcpS. This modification is essential for activity because fatty acids are bound in thioester linkage to the sulfhydryl of the prosthetic group.

Its subcellular location is the cytoplasm. It functions in the pathway lipid metabolism; fatty acid biosynthesis. Its function is as follows. Carrier of the growing fatty acid chain in fatty acid biosynthesis. This is Acyl carrier protein from Karelsulcia muelleri (strain GWSS) (Sulcia muelleri).